Reading from the N-terminus, the 176-residue chain is Siroheme decarboxylase alpha subunit (176 aa).

The segment at 1–24 (MTEAHNACCHPSGTAAGHHGAGKA) is disordered. The segment covering 12 to 24 (SGTAAGHHGAGKA) has biased composition (low complexity).

It belongs to the Ahb/Nir family. Forms a heterodimer composed of AhbA and AhbB. Also forms heterotetramers.

The enzyme catalyses siroheme + 2 H(+) = 12,18-didecarboxysiroheme + 2 CO2. Its pathway is porphyrin-containing compound metabolism; protoheme biosynthesis. Functionally, involved in siroheme-dependent heme b biosynthesis. Catalyzes the decarboxylation of siroheme into didecarboxysiroheme. The polypeptide is Siroheme decarboxylase alpha subunit (Nitratidesulfovibrio vulgaris (strain ATCC 29579 / DSM 644 / CCUG 34227 / NCIMB 8303 / VKM B-1760 / Hildenborough) (Desulfovibrio vulgaris)).